Reading from the N-terminus, the 305-residue chain is Ribonucleoside-diphosphate reductase small subunit (305 aa).

The Fe cation site is built by Glu64, Glu94, and His97. Residue Tyr101 is part of the active site. Residues 150–170 (VLIFYLIEGVFFISSFYCIGL) form a helical membrane-spanning segment. Positions 157, 191, and 194 each coordinate Fe cation.

Belongs to the ribonucleoside diphosphate reductase small chain family. In terms of assembly, heterotetramer composed of a homodimer of the large subunit (R1) and a homodimer of the small subunit (R2). Larger multisubunit protein complex are also active, composed of (R1)n(R2)n. The cofactor is Fe cation.

The protein localises to the host membrane. The catalysed reaction is a 2'-deoxyribonucleoside 5'-diphosphate + [thioredoxin]-disulfide + H2O = a ribonucleoside 5'-diphosphate + [thioredoxin]-dithiol. Functionally, ribonucleoside-diphosphate reductase holoenzyme provides the precursors necessary for viral DNA synthesis. Allows virus growth in non-dividing cells, as well as reactivation from latency in infected hosts. Catalyzes the biosynthesis of deoxyribonucleotides from the corresponding ribonucleotides. This is Ribonucleoside-diphosphate reductase small subunit from Alcelaphine herpesvirus 1 (strain C500) (AlHV-1).